Consider the following 128-residue polypeptide: Large ribosomal subunit protein uL18 (128 aa).

Belongs to the universal ribosomal protein uL18 family. In terms of assembly, part of the 50S ribosomal subunit; part of the 5S rRNA/L5/L18/L25 subcomplex. Contacts the 5S and 23S rRNAs.

This is one of the proteins that bind and probably mediate the attachment of the 5S RNA into the large ribosomal subunit, where it forms part of the central protuberance. This Acidothermus cellulolyticus (strain ATCC 43068 / DSM 8971 / 11B) protein is Large ribosomal subunit protein uL18.